Here is a 544-residue protein sequence, read N- to C-terminus: Phosphoenolpyruvate carboxykinase (ATP) (544 aa).

G246–T253 lines the ATP pocket.

The protein belongs to the phosphoenolpyruvate carboxykinase (ATP) family.

The catalysed reaction is oxaloacetate + ATP = phosphoenolpyruvate + ADP + CO2. Its pathway is carbohydrate biosynthesis; gluconeogenesis. The polypeptide is Phosphoenolpyruvate carboxykinase (ATP) (PCK1) (Candida glabrata (strain ATCC 2001 / BCRC 20586 / JCM 3761 / NBRC 0622 / NRRL Y-65 / CBS 138) (Yeast)).